Reading from the N-terminus, the 619-residue chain is Trihelix transcription factor GTL2 (619 aa).

2 disordered regions span residues 11–41 and 62–100; these read HRFIASPPPPPPLPPHQPAAERSLPFPVSFS and HHHHHHHHHDIKDGGATTGEWIGQTDHDDSDNHHQHHHH. Pro residues predominate over residues 16–27; sequence SPPPPPPLPPHQ. Positions 102 to 154 constitute a Myb-like 1 domain; sequence PWCSDEVLALLRFRSTVENWFPEFTWEHTSRKLAEVGFKRSPQECKEKFEEEE. Residues 307 to 361 adopt a coiled-coil conformation; sequence VRNMIAQQEEMHKKLLEDMVKKEEEKIAREEAWKKQEIERVNKEVEIRAQEQAMA. Disordered regions lie at residues 382 to 414 and 434 to 458; these read VVQNPTSPSQDSSSLALRKTQGRRKFQTSSSLL and STKTLKPKNQNPKPPKSDDKSDLGK. The segment covering 384–396 has biased composition (polar residues); that stretch reads QNPTSPSQDSSSL. Residues 435 to 444 are compositionally biased toward low complexity; it reads TKTLKPKNQN. Residues 448–458 are compositionally biased toward basic and acidic residues; the sequence is PKSDDKSDLGK. In terms of domain architecture, Myb-like 2 spans 459–526; that stretch reads RWPKDEVLAL…RCKEKWENIN (68 aa). The short motif at 503 to 510 is the Nuclear localization signal element; that stretch reads SKKMLEIG. The disordered stretch occupies residues 557 to 619; it reads SQPPTGTTAT…VQFSGFDLEF (63 aa). Residues 561–574 are compositionally biased toward low complexity; it reads TGTTATTATTATSA. Basic and acidic residues predominate over residues 575 to 585; the sequence is RDLDTRPEENR.

The protein localises to the nucleus. Its function is as follows. Probable transcription factor that binds specific DNA sequence. This is Trihelix transcription factor GTL2 from Arabidopsis thaliana (Mouse-ear cress).